We begin with the raw amino-acid sequence, 183 residues long: Ribonuclease H (183 aa).

An RNase H type-1 domain is found at 2–151 (SQARFIAFSD…VDQLAQAAAR (150 aa)). Mg(2+) contacts are provided by Asp-11, Glu-57, Asp-79, and Asp-143.

It belongs to the RNase H family. Monomer. Mg(2+) serves as cofactor.

The protein localises to the cytoplasm. It catalyses the reaction Endonucleolytic cleavage to 5'-phosphomonoester.. Its function is as follows. Endonuclease that specifically degrades the RNA of RNA-DNA hybrids. In Anaeromyxobacter dehalogenans (strain 2CP-1 / ATCC BAA-258), this protein is Ribonuclease H.